We begin with the raw amino-acid sequence, 486 residues long: Galactose-1-phosphate uridylyltransferase (486 aa).

The protein belongs to the galactose-1-phosphate uridylyltransferase type 2 family.

The protein resides in the cytoplasm. The catalysed reaction is alpha-D-galactose 1-phosphate + UDP-alpha-D-glucose = alpha-D-glucose 1-phosphate + UDP-alpha-D-galactose. It functions in the pathway carbohydrate metabolism; galactose metabolism. This is Galactose-1-phosphate uridylyltransferase from Pediococcus pentosaceus (strain ATCC 25745 / CCUG 21536 / LMG 10740 / 183-1w).